The sequence spans 1399 residues: DNA-directed RNA polymerase subunit beta' (1399 aa).

Positions 70, 72, 85, and 88 each coordinate Zn(2+). Residues Asp-460, Asp-462, and Asp-464 each coordinate Mg(2+). Residues Cys-814, Cys-888, Cys-895, and Cys-898 each coordinate Zn(2+).

It belongs to the RNA polymerase beta' chain family. The RNAP catalytic core consists of 2 alpha, 1 beta, 1 beta' and 1 omega subunit. When a sigma factor is associated with the core the holoenzyme is formed, which can initiate transcription. Mg(2+) serves as cofactor. Zn(2+) is required as a cofactor.

The enzyme catalyses RNA(n) + a ribonucleoside 5'-triphosphate = RNA(n+1) + diphosphate. DNA-dependent RNA polymerase catalyzes the transcription of DNA into RNA using the four ribonucleoside triphosphates as substrates. This is DNA-directed RNA polymerase subunit beta' from Pseudomonas entomophila (strain L48).